The primary structure comprises 783 residues: Probable alpha,alpha-trehalose-phosphate synthase [UDP-forming] 3 (783 aa).

Residues 11 to 456 are glycosyltransferase; sequence QTLLVVANRL…GFDFLSELND (446 aa).

This sequence in the N-terminal section; belongs to the glycosyltransferase 20 family. The protein in the C-terminal section; belongs to the trehalose phosphatase family.

It carries out the reaction D-glucose 6-phosphate + UDP-alpha-D-glucose = alpha,alpha-trehalose 6-phosphate + UDP + H(+). This chain is Probable alpha,alpha-trehalose-phosphate synthase [UDP-forming] 3 (TPS3), found in Arabidopsis thaliana (Mouse-ear cress).